The primary structure comprises 173 residues: Co-chaperone protein HscB homolog (173 aa).

A J domain is found at 5–77 (CHFAQFDLQP…PRRALYLLTL (73 aa)).

This sequence belongs to the HscB family. In terms of assembly, interacts with HscA and stimulates its ATPase activity.

Its function is as follows. Co-chaperone involved in the maturation of iron-sulfur cluster-containing proteins. Seems to help targeting proteins to be folded toward HscA. In Pseudomonas paraeruginosa (strain DSM 24068 / PA7) (Pseudomonas aeruginosa (strain PA7)), this protein is Co-chaperone protein HscB homolog.